The chain runs to 257 residues: Homeobox protein goosecoid (257 aa).

The homeobox DNA-binding region spans 160 to 219; the sequence is KRRHRTIFTDEQLEALENLFQETKYPDVGTREQLARKVHLREEKVEVWFKNRRAKWRRQK. The interval 213 to 257 is disordered; it reads AKWRRQKRSSSEESENAEKWNKTSSSKASPEKREEEGKSDLDSDS. Over residues 241 to 257 the composition is skewed to basic and acidic residues; sequence SPEKREEEGKSDLDSDS.

This sequence belongs to the paired homeobox family. Bicoid subfamily.

The protein localises to the nucleus. Its function is as follows. Regulates chordin (CHRD). May play a role in spatial programing within discrete embryonic fields or lineage compartments during organogenesis. In concert with NKX3-2, plays a role in defining the structural components of the middle ear; required for the development of the entire tympanic ring. Probably involved in the regulatory networks that define neural crest cell fate specification and determine mesoderm cell lineages in mammals. This chain is Homeobox protein goosecoid (GSC), found in Saguinus labiatus (Red-chested mustached tamarin).